A 378-amino-acid chain; its full sequence is UPF0754 membrane protein BCG9842_B4423 (378 aa).

The chain crosses the membrane as a helical span at residues 357–377; the sequence is YLGALLGGIIGLVQGLLLLFL.

This sequence belongs to the UPF0754 family.

The protein localises to the cell membrane. This chain is UPF0754 membrane protein BCG9842_B4423, found in Bacillus cereus (strain G9842).